The following is a 368-amino-acid chain: tRNA-specific 2-thiouridylase MnmA (368 aa).

ATP contacts are provided by residues 11–18 (GMSGGVDS) and Met37. Positions 97 to 99 (NPD) are interaction with target base in tRNA. Residue Cys102 is the Nucleophile of the active site. A disulfide bridge links Cys102 with Cys199. Gly127 lines the ATP pocket. The interval 149–151 (KDQ) is interaction with tRNA. The Cysteine persulfide intermediate role is filled by Cys199. The segment at 311 to 312 (RY) is interaction with tRNA.

The protein belongs to the MnmA/TRMU family. Interacts with TusE.

It is found in the cytoplasm. It catalyses the reaction S-sulfanyl-L-cysteinyl-[protein] + uridine(34) in tRNA + AH2 + ATP = 2-thiouridine(34) in tRNA + L-cysteinyl-[protein] + A + AMP + diphosphate + H(+). In terms of biological role, catalyzes the 2-thiolation of uridine at the wobble position (U34) of tRNA(Lys), tRNA(Glu) and tRNA(Gln), leading to the formation of s(2)U34, the first step of tRNA-mnm(5)s(2)U34 synthesis. Sulfur is provided by IscS, via a sulfur-relay system. Binds ATP and its substrate tRNAs. In Shigella flexneri serotype 5b (strain 8401), this protein is tRNA-specific 2-thiouridylase MnmA.